The sequence spans 663 residues: General transcription and DNA repair factor IIH subunit tcf-29 (663 aa).

BSD domains follow at residues 147-206 (WFED…RAYA) and 227-278 (ENGE…LSKK). Disordered regions lie at residues 452–491 (DSDG…QHVG) and 513–535 (HLTT…EERP). The span at 453-465 (SDGRGGIDLHRSI) shows a compositional bias: basic and acidic residues. The segment covering 515-528 (TTTTTHGGSHTTTT) has biased composition (low complexity).

It belongs to the TFB1 family. As to quaternary structure, component of the 7-subunit TFIIH core complex composed of XPB/rad25, XPD/dnr-10, tcf-30/SSL1, tcf-29/TFB1, tcf-11/TFB2, tcf-14/TFB4 and rtf-1/TFB5, which is active in NER. The core complex associates with the 3-subunit CTD-kinase module TFIIK composed of div-66/cyclin H, prk-3/KIN28 and rtf-2/TFB3 to form the 10-subunit holoenzyme (holo-TFIIH) active in transcription.

Its subcellular location is the nucleus. In terms of biological role, component of the general transcription and DNA repair factor IIH (TFIIH) core complex, which is involved in general and transcription-coupled nucleotide excision repair (NER) of damaged DNA and, when complexed to TFIIK, in RNA transcription by RNA polymerase II. In NER, TFIIH acts by opening DNA around the lesion to allow the excision of the damaged oligonucleotide and its replacement by a new DNA fragment. In transcription, TFIIH has an essential role in transcription initiation. When the pre-initiation complex (PIC) has been established, TFIIH is required for promoter opening and promoter escape. Phosphorylation of the C-terminal tail (CTD) of the largest subunit of RNA polymerase II by the kinase module TFIIK controls the initiation of transcription. This chain is General transcription and DNA repair factor IIH subunit tcf-29 (tcf-29), found in Neurospora crassa (strain ATCC 24698 / 74-OR23-1A / CBS 708.71 / DSM 1257 / FGSC 987).